Reading from the N-terminus, the 240-residue chain is UDP-2,3-diacylglucosamine hydrolase (240 aa).

Mn(2+) is bound by residues D8, H10, D41, N79, and H114. 79–80 (NR) provides a ligand contact to substrate. Residues D122, S160, N164, K167, and H195 each contribute to the substrate site. Mn(2+) is bound by residues H195 and H197.

Belongs to the LpxH family. Mn(2+) serves as cofactor.

The protein localises to the cell inner membrane. The catalysed reaction is UDP-2-N,3-O-bis[(3R)-3-hydroxytetradecanoyl]-alpha-D-glucosamine + H2O = 2-N,3-O-bis[(3R)-3-hydroxytetradecanoyl]-alpha-D-glucosaminyl 1-phosphate + UMP + 2 H(+). Its pathway is glycolipid biosynthesis; lipid IV(A) biosynthesis; lipid IV(A) from (3R)-3-hydroxytetradecanoyl-[acyl-carrier-protein] and UDP-N-acetyl-alpha-D-glucosamine: step 4/6. In terms of biological role, hydrolyzes the pyrophosphate bond of UDP-2,3-diacylglucosamine to yield 2,3-diacylglucosamine 1-phosphate (lipid X) and UMP by catalyzing the attack of water at the alpha-P atom. Involved in the biosynthesis of lipid A, a phosphorylated glycolipid that anchors the lipopolysaccharide to the outer membrane of the cell. This Salmonella schwarzengrund (strain CVM19633) protein is UDP-2,3-diacylglucosamine hydrolase.